The primary structure comprises 218 residues: Probable nicotinate-nucleotide adenylyltransferase (218 aa).

Belongs to the NadD family.

It carries out the reaction nicotinate beta-D-ribonucleotide + ATP + H(+) = deamido-NAD(+) + diphosphate. It participates in cofactor biosynthesis; NAD(+) biosynthesis; deamido-NAD(+) from nicotinate D-ribonucleotide: step 1/1. Its function is as follows. Catalyzes the reversible adenylation of nicotinate mononucleotide (NaMN) to nicotinic acid adenine dinucleotide (NaAD). This is Probable nicotinate-nucleotide adenylyltransferase from Corynebacterium glutamicum (strain ATCC 13032 / DSM 20300 / JCM 1318 / BCRC 11384 / CCUG 27702 / LMG 3730 / NBRC 12168 / NCIMB 10025 / NRRL B-2784 / 534).